Here is a 197-residue protein sequence, read N- to C-terminus: Peptide deformylase (197 aa).

Fe cation is bound by residues Cys-106 and His-148. Glu-149 is an active-site residue. His-152 is a binding site for Fe cation.

The protein belongs to the polypeptide deformylase family. The cofactor is Fe(2+).

The catalysed reaction is N-terminal N-formyl-L-methionyl-[peptide] + H2O = N-terminal L-methionyl-[peptide] + formate. Functionally, removes the formyl group from the N-terminal Met of newly synthesized proteins. Requires at least a dipeptide for an efficient rate of reaction. N-terminal L-methionine is a prerequisite for activity but the enzyme has broad specificity at other positions. The sequence is that of Peptide deformylase from Mycolicibacterium smegmatis (strain ATCC 700084 / mc(2)155) (Mycobacterium smegmatis).